A 422-amino-acid polypeptide reads, in one-letter code: 2-(3-amino-3-carboxypropyl)histidine synthase subunit 1 (422 aa).

3 residues coordinate [4Fe-4S] cluster: cysteine 128, cysteine 234, and cysteine 363.

The protein belongs to the DPH1/DPH2 family. DPH1 subfamily. In terms of assembly, component of the 2-(3-amino-3-carboxypropyl)histidine synthase complex composed of DPH1, DPH2, DPH3 and a NADH-dependent reductase, predominantly CBR1. [4Fe-4S] cluster is required as a cofactor.

Its subcellular location is the cytoplasm. The enzyme catalyses L-histidyl-[translation elongation factor 2] + S-adenosyl-L-methionine = 2-[(3S)-amino-3-carboxypropyl]-L-histidyl-[translation elongation factor 2] + S-methyl-5'-thioadenosine + H(+). It participates in protein modification; peptidyl-diphthamide biosynthesis. In terms of biological role, catalyzes the first step of diphthamide biosynthesis, a post-translational modification of histidine which occurs in elongation factor 2. DPH1 and DPH2 transfer a 3-amino-3-carboxypropyl (ACP) group from S-adenosyl-L-methionine (SAM) to a histidine residue, the reaction is assisted by a reduction system comprising DPH3 and a NADH-dependent reductase, predominantly CBR1. The protein is 2-(3-amino-3-carboxypropyl)histidine synthase subunit 1 (DPH1) of Kluyveromyces lactis (strain ATCC 8585 / CBS 2359 / DSM 70799 / NBRC 1267 / NRRL Y-1140 / WM37) (Yeast).